The chain runs to 122 residues: Large ribosomal subunit protein uL14c (122 aa).

This sequence belongs to the universal ribosomal protein uL14 family. In terms of assembly, part of the 50S ribosomal subunit.

The protein resides in the plastid. Its subcellular location is the chloroplast. Its function is as follows. Binds to 23S rRNA. This Oenothera biennis (German evening primrose) protein is Large ribosomal subunit protein uL14c.